A 415-amino-acid polypeptide reads, in one-letter code: Phosphoglycerate kinase (415 aa).

Substrate-binding positions include 24–26 (DLN), R39, 62–65 (HLGR), R121, and R161. Residues K211, G307, E338, and 367-370 (GGDS) each bind ATP.

Belongs to the phosphoglycerate kinase family. As to quaternary structure, monomer.

It localises to the cytoplasm. The catalysed reaction is (2R)-3-phosphoglycerate + ATP = (2R)-3-phospho-glyceroyl phosphate + ADP. Its pathway is carbohydrate degradation; glycolysis; pyruvate from D-glyceraldehyde 3-phosphate: step 2/5. The sequence is that of Phosphoglycerate kinase from Micrococcus luteus (strain ATCC 4698 / DSM 20030 / JCM 1464 / CCM 169 / CCUG 5858 / IAM 1056 / NBRC 3333 / NCIMB 9278 / NCTC 2665 / VKM Ac-2230) (Micrococcus lysodeikticus).